The following is a 119-amino-acid chain: Chorion class CA protein ERA.5 (119 aa).

Positions 1–21 (MSTYTFVLFCLQICLIQNVYS) are cleaved as a signal peptide. Residues 22-55 (QCLGRVGPGGPPVGPYGGPLGGPGYGPVGYGGCG) are left arm. The interval 56-103 (GYGGSGIGNVAVAGELPVAGSSAVMGQVPVIGAVEFAGPACAVGSVSI) is central domain. The interval 104–119 (SGACGPTCGCGGSPYY) is right arm.

The protein belongs to the chorion protein family.

Functionally, this protein is one of many from the eggshell of the silk moth. The chain is Chorion class CA protein ERA.5 (ERA.5) from Bombyx mori (Silk moth).